A 180-amino-acid polypeptide reads, in one-letter code: ADP-ribosylation factor-like protein 1 (180 aa).

The N-myristoyl glycine moiety is linked to residue Gly2. Residues 23-30 (GLDGAGKT), 66-70 (DLGGQ), and 125-128 (NKQD) contribute to the GTP site.

It belongs to the small GTPase superfamily. Arf family.

GTP-binding protein involved in protein trafficking; may modulate vesicle budding and uncoating within the Golgi apparatus. The polypeptide is ADP-ribosylation factor-like protein 1 (Arl1) (Drosophila melanogaster (Fruit fly)).